A 253-amino-acid chain; its full sequence is Imidazole glycerol phosphate synthase subunit HisF (253 aa).

Active-site residues include D11 and D130.

The protein belongs to the HisA/HisF family. As to quaternary structure, heterodimer of HisH and HisF.

The protein localises to the cytoplasm. The catalysed reaction is 5-[(5-phospho-1-deoxy-D-ribulos-1-ylimino)methylamino]-1-(5-phospho-beta-D-ribosyl)imidazole-4-carboxamide + L-glutamine = D-erythro-1-(imidazol-4-yl)glycerol 3-phosphate + 5-amino-1-(5-phospho-beta-D-ribosyl)imidazole-4-carboxamide + L-glutamate + H(+). It participates in amino-acid biosynthesis; L-histidine biosynthesis; L-histidine from 5-phospho-alpha-D-ribose 1-diphosphate: step 5/9. In terms of biological role, IGPS catalyzes the conversion of PRFAR and glutamine to IGP, AICAR and glutamate. The HisF subunit catalyzes the cyclization activity that produces IGP and AICAR from PRFAR using the ammonia provided by the HisH subunit. The protein is Imidazole glycerol phosphate synthase subunit HisF of Clostridium botulinum (strain Okra / Type B1).